Here is a 313-residue protein sequence, read N- to C-terminus: NADH-ubiquinone oxidoreductase chain 1 (313 aa).

Helical transmembrane passes span 7 to 27 (LIGS…LTLL), 73 to 93 (IFYY…WMSM), 104 to 124 (LGVL…MVAG), 150 to 170 (LALI…LNFF), 175 to 195 (YMWF…SCLA), 226 to 246 (LIFL…SVIF), 250 to 270 (DIYS…FIWV), and 293 to 313 (MSLN…SMLF).

The protein belongs to the complex I subunit 1 family.

The protein resides in the mitochondrion inner membrane. The catalysed reaction is a ubiquinone + NADH + 5 H(+)(in) = a ubiquinol + NAD(+) + 4 H(+)(out). Functionally, core subunit of the mitochondrial membrane respiratory chain NADH dehydrogenase (Complex I) that is believed to belong to the minimal assembly required for catalysis. Complex I functions in the transfer of electrons from NADH to the respiratory chain. The immediate electron acceptor for the enzyme is believed to be ubiquinone. This is NADH-ubiquinone oxidoreductase chain 1 from Aedes aegypti (Yellowfever mosquito).